Consider the following 366-residue polypeptide: Aminomethyltransferase (366 aa).

This sequence belongs to the GcvT family. In terms of assembly, the glycine cleavage system is composed of four proteins: P, T, L and H.

The enzyme catalyses N(6)-[(R)-S(8)-aminomethyldihydrolipoyl]-L-lysyl-[protein] + (6S)-5,6,7,8-tetrahydrofolate = N(6)-[(R)-dihydrolipoyl]-L-lysyl-[protein] + (6R)-5,10-methylene-5,6,7,8-tetrahydrofolate + NH4(+). Its function is as follows. The glycine cleavage system catalyzes the degradation of glycine. In Bacillus cereus (strain ZK / E33L), this protein is Aminomethyltransferase.